Here is a 296-residue protein sequence, read N- to C-terminus: Carboxylesterase YbfK (296 aa).

Catalysis depends on charge relay system residues serine 129, glutamate 244, and histidine 273.

Belongs to the AB hydrolase superfamily.

The protein localises to the cytoplasm. It carries out the reaction a carboxylic ester + H2O = an alcohol + a carboxylate + H(+). Shows carboxylesterase activity in vitro. The chain is Carboxylesterase YbfK (ybfK) from Bacillus subtilis (strain 168).